The chain runs to 362 residues: Very-long-chain (3R)-3-hydroxyacyl-CoA dehydratase (362 aa).

Residues 1–149 (MADCSLRPHV…DPFKHLKKGY (149 aa)) lie on the Cytoplasmic side of the membrane. Positions 5-94 (SLRPHVHWAQ…KESSWWERLT (90 aa)) constitute a CS domain. Residues 111 to 135 (LDESDAEMELKEKEEEKINKMKIES) adopt a coiled-coil conformation. The chain crosses the membrane as a helical span at residues 150 to 170 (LIMYNLVQFLGFSWIFVNMTV). Residues 171–189 (RLFILGKDSFYDTFHTIAD) are Lumenal-facing. Residues 190–210 (MMYFCQTLALMEILNSLIGLV) form a helical membrane-spanning segment. Over 211 to 212 (RS) the chain is Cytoplasmic. The helical transmembrane segment at 213-233 (PLIPAVIQVFGRNFILFVVLG) threads the bilayer. Over 234–242 (SLEEMQSKA) the chain is Lumenal. The helical transmembrane segment at 243-263 (VVFFLFYFWSIIELFRYPYYM) threads the bilayer. Residues 264 to 282 (LSCMGIEWKPLTWLRYTSW) are Cytoplasmic-facing. The chain crosses the membrane as a helical span at residues 283-303 (IPLYPLGGLAEAVCLIQSIPI). Active-site residues include tyrosine 286 and glutamate 293. At 304 to 319 (FSETGKFSLGLPNPLN) the chain is on the lumenal side. The chain crosses the membrane as a helical span at residues 320 to 340 (VTIQFSFLLQMYLIALFLGLF). Residues 341–362 (VNFRYLYKQRKQHLGPKKRKMK) are Cytoplasmic-facing.

Belongs to the very long-chain fatty acids dehydratase HACD family.

It is found in the endoplasmic reticulum membrane. It carries out the reaction a very-long-chain (3R)-3-hydroxyacyl-CoA = a very-long-chain (2E)-enoyl-CoA + H2O. The catalysed reaction is (3R)-hydroxyhexadecanoyl-CoA = (2E)-hexadecenoyl-CoA + H2O. It participates in lipid metabolism; fatty acid biosynthesis. Catalyzes the third of the four reactions of the long-chain fatty acids elongation cycle. This endoplasmic reticulum-bound enzymatic process, allows the addition of two carbons to the chain of long- and very long-chain fatty acids/VLCFAs per cycle. This enzyme catalyzes the dehydration of the 3-hydroxyacyl-CoA intermediate into trans-2,3-enoyl-CoA, within each cycle of fatty acid elongation. Thereby, it participates in the production of VLCFAs of different chain lengths that are involved in multiple biological processes as precursors of membrane lipids and lipid mediators. Involved in Rac1-signaling pathways leading to the modulation of gene expression. In Gallus gallus (Chicken), this protein is Very-long-chain (3R)-3-hydroxyacyl-CoA dehydratase.